Reading from the N-terminus, the 164-residue chain is Thioredoxin domain-containing protein R443 (164 aa).

The chain crosses the membrane as a helical span at residues His8–Cys28. The Thioredoxin domain maps to Tyr36 to Asn163. A disulfide bridge connects residues Cys84 and Cys87.

The protein belongs to the thioredoxin family.

It is found in the host membrane. Its subcellular location is the virion. The polypeptide is Thioredoxin domain-containing protein R443 (Acanthamoeba polyphaga mimivirus (APMV)).